The primary structure comprises 81 residues: Putative membrane protein insertion efficiency factor 1 (81 aa).

This sequence belongs to the UPF0161 family.

It is found in the cell membrane. Its function is as follows. Could be involved in insertion of integral membrane proteins into the membrane. This is Putative membrane protein insertion efficiency factor 1 from Bacillus licheniformis (strain ATCC 14580 / DSM 13 / JCM 2505 / CCUG 7422 / NBRC 12200 / NCIMB 9375 / NCTC 10341 / NRRL NRS-1264 / Gibson 46).